A 121-amino-acid polypeptide reads, in one-letter code: Spermidine export protein MdtJ (121 aa).

Residue Met-1 is a topological domain, cytoplasmic. Residues 2–22 (YIYWILLGLAVATEITGTLSM) traverse the membrane as a helical segment. Residues 23 to 31 (KWASVSEGN) are Periplasmic-facing. The chain crosses the membrane as a helical span at residues 32 to 52 (GGFILMLVMISLSYIFLSFAV). Residues 53 to 54 (KK) lie on the Cytoplasmic side of the membrane. A helical membrane pass occupies residues 55 to 75 (IALGVAYALWEGIGILFITLF). Topologically, residues 76-81 (SVLLFD) are periplasmic. Residues 82–102 (ESLSLMKIAGLTTLVAGIVLI) form a helical membrane-spanning segment. Residues 103-121 (KSGTRKARKPELEVNHGAV) are Cytoplasmic-facing.

It belongs to the drug/metabolite transporter (DMT) superfamily. Small multidrug resistance (SMR) (TC 2.A.7.1) family. MdtJ subfamily. Forms a complex with MdtI.

The protein localises to the cell inner membrane. In terms of biological role, catalyzes the excretion of spermidine. This is Spermidine export protein MdtJ (mdtJ) from Escherichia coli O6:H1 (strain CFT073 / ATCC 700928 / UPEC).